Reading from the N-terminus, the 76-residue chain is Tautomerase PptA (76 aa).

Proline 2 acts as the Proton acceptor; via imino nitrogen in catalysis.

It belongs to the 4-oxalocrotonate tautomerase family. PptA subfamily. Homodimer.

It is found in the cytoplasm. This Enterobacter sp. (strain 638) protein is Tautomerase PptA.